The following is a 456-amino-acid chain: DEAD-box ATP-dependent RNA helicase 10 (456 aa).

Positions 9–37 match the Q motif motif; it reads KTFAELGVREELVKACERLGWKNPSKIQA. The Helicase ATP-binding domain maps to 40–223; sequence LPFALEGKDV…RACLRNPVKI (184 aa). 53 to 60 provides a ligand contact to ATP; sequence AQTGSGKT. A DEAD box motif is present at residues 171–174; it reads DEAD. The Helicase C-terminal domain maps to 250-394; sequence YLVYILSEMP…EYPAEEDEVL (145 aa). Residues 407–456 form a disordered region; that stretch reads SAMNMKESGGRKRRGEDDEESERFLGGNKDRGNKERGGNKDKKSSKKFKR. The segment covering 434-448 has biased composition (basic and acidic residues); sequence NKDRGNKERGGNKDK.

The protein belongs to the DEAD box helicase family. DDX47/RRP3 subfamily. As to expression, expressed in all tissues and organs examined including root, cotyledon, first and second leaves, third and fourth leaves, fifth and sixth leaves, shoot apex, flower, flower bud, cauline leaf and rosette leaves.

The protein localises to the nucleus. The protein resides in the nucleolus. The enzyme catalyses ATP + H2O = ADP + phosphate + H(+). Its function is as follows. Involved in leaf polarity establishment by functioning cooperatively with AS2 to repress abaxial genes ARF3, ARF4, KAN1, KAN2, YAB1 and YAB5, and the knox homeobox genes KNAT1, KNAT2, KNAT6, and STM to promote adaxial development in leaf primordia at shoot apical meristems at high temperatures. Involved in the processing of pre-rRNA intermediates at high temperatures. The polypeptide is DEAD-box ATP-dependent RNA helicase 10 (RH10) (Arabidopsis thaliana (Mouse-ear cress)).